The following is a 545-amino-acid chain: Chaperonin GroEL 1 (545 aa).

Residues 30 to 33 (TLGP), K51, 87 to 91 (DGTTT), G415, 479 to 481 (NAA), and D495 each bind ATP.

The protein belongs to the chaperonin (HSP60) family. As to quaternary structure, forms a cylinder of 14 subunits composed of two heptameric rings stacked back-to-back. Interacts with the co-chaperonin GroES.

It is found in the cytoplasm. The catalysed reaction is ATP + H2O + a folded polypeptide = ADP + phosphate + an unfolded polypeptide.. Functionally, together with its co-chaperonin GroES, plays an essential role in assisting protein folding. The GroEL-GroES system forms a nano-cage that allows encapsulation of the non-native substrate proteins and provides a physical environment optimized to promote and accelerate protein folding. This Methylococcus capsulatus (strain ATCC 33009 / NCIMB 11132 / Bath) protein is Chaperonin GroEL 1.